Reading from the N-terminus, the 327-residue chain is DNA-directed RNA polymerase subunit alpha (327 aa).

Residues 1 to 233 (MVREKVKVST…NLFIPFLHVE (233 aa)) are alpha N-terminal domain (alpha-NTD). Residues 267–327 (LAFQYIFIDQ…KKILDILEKK (61 aa)) are alpha C-terminal domain (alpha-CTD).

Belongs to the RNA polymerase alpha chain family. As to quaternary structure, in plastids the minimal PEP RNA polymerase catalytic core is composed of four subunits: alpha, beta, beta', and beta''. When a (nuclear-encoded) sigma factor is associated with the core the holoenzyme is formed, which can initiate transcription.

The protein resides in the plastid. It localises to the chloroplast. The catalysed reaction is RNA(n) + a ribonucleoside 5'-triphosphate = RNA(n+1) + diphosphate. Its function is as follows. DNA-dependent RNA polymerase catalyzes the transcription of DNA into RNA using the four ribonucleoside triphosphates as substrates. This Draba nemorosa (Woodland whitlowgrass) protein is DNA-directed RNA polymerase subunit alpha.